The sequence spans 118 residues: NLIQFSELIQCANKGKRATYYYMDYGCYCGKGGSGTPVDDLDRCCKTHDDCYGQAEKKGCFPFLTLYNFICFPGGPTCDRGTTCQRFVCDCDIQAAFCFARSPYNNKNYNINISKRCK.

Intrachain disulfides connect cysteine 11-cysteine 71, cysteine 27-cysteine 117, cysteine 29-cysteine 45, cysteine 44-cysteine 98, cysteine 51-cysteine 91, cysteine 60-cysteine 84, and cysteine 78-cysteine 89. 3 residues coordinate Ca(2+): tyrosine 28, glycine 30, and glycine 32. Residue histidine 48 is part of the active site. A Ca(2+)-binding site is contributed by aspartate 49. Aspartate 92 is an active-site residue.

This sequence belongs to the phospholipase A2 family. Group I subfamily. D49 sub-subfamily. Ca(2+) serves as cofactor. Expressed by the venom gland.

Its subcellular location is the secreted. The catalysed reaction is a 1,2-diacyl-sn-glycero-3-phosphocholine + H2O = a 1-acyl-sn-glycero-3-phosphocholine + a fatty acid + H(+). Its function is as follows. Snake venom phospholipase A2 (PLA2) that inhibits neuromuscular transmission by blocking acetylcholine release from the nerve termini. PLA2 catalyzes the calcium-dependent hydrolysis of the 2-acyl groups in 3-sn-phosphoglycerides. The chain is Basic phospholipase A2 2 from Laticauda colubrina (Yellow-lipped sea krait).